Reading from the N-terminus, the 79-residue chain is Putative defensin-like protein 146 (79 aa).

Positions 1–25 (MMKNQFQLSLIILTFFILLELGVMG) are cleaved as a signal peptide. Disulfide bonds link C35–C78, C46–C66, C51–C72, and C55–C74.

It belongs to the DEFL family.

The protein localises to the secreted. The chain is Putative defensin-like protein 146 (LCR9) from Arabidopsis thaliana (Mouse-ear cress).